The sequence spans 421 residues: Histidine--tRNA ligase (421 aa).

Belongs to the class-II aminoacyl-tRNA synthetase family. Homodimer.

The protein resides in the cytoplasm. The enzyme catalyses tRNA(His) + L-histidine + ATP = L-histidyl-tRNA(His) + AMP + diphosphate + H(+). The polypeptide is Histidine--tRNA ligase (Natranaerobius thermophilus (strain ATCC BAA-1301 / DSM 18059 / JW/NM-WN-LF)).